The chain runs to 295 residues: Succinate dehydrogenase assembly factor 2, mitochondrial (295 aa).

3 disordered regions span residues Ala-35–Leu-90, Pro-208–Ala-227, and Thr-269–Ser-295. The segment covering Ser-45–Asn-75 has biased composition (polar residues).

The protein belongs to the SDHAF2 family. Interacts with the flavoprotein subunit within the SDH catalytic dimer.

Its subcellular location is the mitochondrion matrix. Plays an essential role in the assembly of succinate dehydrogenase (SDH), an enzyme complex (also referred to as respiratory complex II) that is a component of both the tricarboxylic acid (TCA) cycle and the mitochondrial electron transport chain, and which couples the oxidation of succinate to fumarate with the reduction of ubiquinone (coenzyme Q) to ubiquinol. Required for flavinylation (covalent attachment of FAD) of the flavoprotein subunit of the SDH catalytic dimer. The chain is Succinate dehydrogenase assembly factor 2, mitochondrial from Aspergillus terreus (strain NIH 2624 / FGSC A1156).